Here is a 503-residue protein sequence, read N- to C-terminus: EZH inhibitory protein (503 aa).

Positions 1 to 16 (MATQSDMEKEQKHQQD) are enriched in basic and acidic residues. Disordered stretches follow at residues 1–72 (MATQ…AAAA), 97–462 (HSDR…RSIS), and 483–503 (VPPE…PPEP). Over residues 41–72 (PAASVTTVSSQASPSGGAALSSSTAGSSAAAA) the composition is skewed to low complexity. The segment covering 97-107 (HSDRQDCRSPH) has biased composition (basic and acidic residues). The span at 184–197 (YPCSGASTSSQATQ) shows a compositional bias: polar residues. The residue at position 259 (Ser259) is a Phosphoserine. The segment covering 345–366 (LRSRSTQQRSALLSRRSLSGSA) has biased composition (low complexity). Residues 401–409 (WHAVRMRAS) are sufficient for interaction with EZH2. The interval 403-423 (AVRMRASSPSPPGRFFLPIPQ) is necessary and sufficient for inhibition of PRC2/EED-EZH1 and PRC2/EED-EZH2 complex activity. Residues 428 to 453 (SSSSSYASNSSSPSRSPGLSPSSPSP) show a composition bias toward low complexity.

Interacts with PRC2/EED-EZH1 complex member EZH1 and with PRC2/EED-EZH2 complex member EZH2; the interaction blocks EZH1/EZH2 methyltransferase activity. Interacts (via C-terminus) with SUZ12 which is a member of the PRC2/EED-EZH1 and PRC2/EED-EZH2 complexes. As to expression, in testis, detected in male germ cells inside the seminiferous tubules, especially in spermatogonia and round spermatids (at protein level). In the ovary, expressed in primordial follicles and oocytes but not the external follicle cells (at protein level).

It is found in the nucleus. The protein resides in the cytoplasm. Functionally, inhibits PRC2/EED-EZH1 and PRC2/EED-EZH2 complex function by inhibiting EZH1/EZH2 methyltransferase activity, thereby causing down-regulation of histone H3 trimethylation on 'Lys-27' (H3K27me3). Probably inhibits methyltransferase activity by limiting the stimulatory effect of cofactors such as AEBP2 and JARID2. Inhibits H3K27me3 deposition during spermatogenesis and oogenesis. The sequence is that of EZH inhibitory protein from Homo sapiens (Human).